A 508-amino-acid polypeptide reads, in one-letter code: 2,3-bisphosphoglycerate-independent phosphoglycerate mutase (508 aa).

Residues Asp-11 and Ser-61 each contribute to the Mn(2+) site. Ser-61 acts as the Phosphoserine intermediate in catalysis. Residues His-122, 150–151 (RD), Arg-182, Arg-188, 257–260 (RPDR), and Lys-332 contribute to the substrate site. Positions 397, 401, 438, 439, and 456 each coordinate Mn(2+).

This sequence belongs to the BPG-independent phosphoglycerate mutase family. As to quaternary structure, monomer. Requires Mn(2+) as cofactor.

The enzyme catalyses (2R)-2-phosphoglycerate = (2R)-3-phosphoglycerate. Its pathway is carbohydrate degradation; glycolysis; pyruvate from D-glyceraldehyde 3-phosphate: step 3/5. Functionally, catalyzes the interconversion of 2-phosphoglycerate and 3-phosphoglycerate. In Mycoplasma pneumoniae (strain ATCC 29342 / M129 / Subtype 1) (Mycoplasmoides pneumoniae), this protein is 2,3-bisphosphoglycerate-independent phosphoglycerate mutase.